Reading from the N-terminus, the 128-residue chain is Sulfurtransferase TusD (128 aa).

Cys78 serves as the catalytic Cysteine persulfide intermediate.

The protein belongs to the DsrE/TusD family. In terms of assembly, heterohexamer, formed by a dimer of trimers. The hexameric TusBCD complex contains 2 copies each of TusB, TusC and TusD. The TusBCD complex interacts with TusE.

It localises to the cytoplasm. Its function is as follows. Part of a sulfur-relay system required for 2-thiolation of 5-methylaminomethyl-2-thiouridine (mnm(5)s(2)U) at tRNA wobble positions. Accepts sulfur from TusA and transfers it in turn to TusE. This chain is Sulfurtransferase TusD, found in Escherichia coli O127:H6 (strain E2348/69 / EPEC).